A 350-amino-acid polypeptide reads, in one-letter code: Probable arabinogalactan endo-beta-1,4-galactanase A (350 aa).

The signal sequence occupies residues 1–16 (MIYSLLLSALPLLSSA). A glycan (N-linked (GlcNAc...) asparagine) is linked at asparagine 128. Catalysis depends on glutamate 152, which acts as the Proton donor. The Nucleophile role is filled by glutamate 262.

This sequence belongs to the glycosyl hydrolase 53 family.

It localises to the secreted. It catalyses the reaction The enzyme specifically hydrolyzes (1-&gt;4)-beta-D-galactosidic linkages in type I arabinogalactans.. Functionally, endogalactanase involved in the degradation of plant cell wall polysaccharides, and more particularly of hairy regions of pectin. The protein is Probable arabinogalactan endo-beta-1,4-galactanase A (galA) of Aspergillus niger (strain ATCC MYA-4892 / CBS 513.88 / FGSC A1513).